The chain runs to 417 residues: Serpin H1 (417 aa).

Residues 1-17 (MRSLLLGTLCLLAVALA) form the signal peptide. An N6-succinyllysine modification is found at Lys-93. Residues Asn-119 and Asn-124 are each glycosylated (N-linked (GlcNAc...) asparagine). Residue Ser-140 is modified to Phosphoserine. Lys-206 is modified (N6-acetyllysine). N6-succinyllysine is present on Lys-295. An N6-acetyllysine modification is found at Lys-318. Asn-394 carries N-linked (GlcNAc...) asparagine glycosylation. Residues 414-417 (RDEL) carry the Prevents secretion from ER motif.

It belongs to the serpin family.

The protein resides in the endoplasmic reticulum lumen. Binds specifically to collagen. Could be involved as a chaperone in the biosynthetic pathway of collagen. The sequence is that of Serpin H1 (Serpinh1) from Rattus norvegicus (Rat).